The following is a 200-amino-acid chain: Probable molybdenum cofactor guanylyltransferase (200 aa).

GTP-binding positions include 9–11 (LAG), Lys21, Asp69, and Asp100. Asp100 serves as a coordination point for Mg(2+).

Belongs to the MobA family. Mg(2+) serves as cofactor.

It localises to the cytoplasm. The catalysed reaction is Mo-molybdopterin + GTP + H(+) = Mo-molybdopterin guanine dinucleotide + diphosphate. In terms of biological role, transfers a GMP moiety from GTP to Mo-molybdopterin (Mo-MPT) cofactor (Moco or molybdenum cofactor) to form Mo-molybdopterin guanine dinucleotide (Mo-MGD) cofactor. This is Probable molybdenum cofactor guanylyltransferase from Bacillus thuringiensis (strain Al Hakam).